We begin with the raw amino-acid sequence, 185 residues long: Large ribosomal subunit protein uL22 (185 aa).

This sequence belongs to the universal ribosomal protein uL22 family. As to quaternary structure, part of the 50S ribosomal subunit.

Its function is as follows. This protein binds specifically to 23S rRNA. It makes multiple contacts with different domains of the 23S rRNA in the assembled 50S subunit and ribosome. In terms of biological role, the globular domain of the protein is located near the polypeptide exit tunnel on the outside of the subunit, while an extended beta-hairpin is found that lines the wall of the exit tunnel in the center of the 70S ribosome. In Pyrobaculum neutrophilum (strain DSM 2338 / JCM 9278 / NBRC 100436 / V24Sta) (Thermoproteus neutrophilus), this protein is Large ribosomal subunit protein uL22.